A 920-amino-acid chain; its full sequence is Rho GTPase-activating protein REN1 (920 aa).

The segment covering 1 to 10 (MANKNAESSS) has biased composition (polar residues). The disordered stretch occupies residues 1-64 (MANKNAESSS…SRGGNTVFKS (64 aa)). A compositionally biased stretch (low complexity) spans 17–31 (QPNQQQQQQPPIANE). Residues 45–64 (PAQSGNTDSRSRGGNTVFKS) are compositionally biased toward polar residues. Positions 60–167 (TVFKSGPLSI…WKAALENALT (108 aa)) constitute a PH domain. Residues 213–412 (LALEDVDGAP…TLLEEYESIF (200 aa)) enclose the Rho-GAP domain. Disordered stretches follow at residues 417-592 (LSPG…NLSM), 719-825 (RLGH…ALSK), and 837-920 (RSQI…TFSR). The segment covering 434–463 (EGSDDEEYDDDDDGSQGSEDYTDEEEDLEN) has biased composition (acidic residues). Residues 464–473 (ESNGSYSESA) show a composition bias toward polar residues. Basic and acidic residues-rich tracts occupy residues 475-491 (SEDK…HKIN), 499-509 (KSPKRSKEPKK), and 520-532 (PRHD…EDIV). The segment covering 555 to 568 (SSTSDVASDTQKPS) has biased composition (polar residues). Residues 577–586 (SKRHWGRTPG) are compositionally biased toward basic residues. Residues 598–728 (SVEVDEDNAD…RLGHHDGKAS (131 aa)) are a coiled coil. 2 stretches are compositionally biased toward basic and acidic residues: residues 734–768 (ASKE…RSTS) and 776–788 (RENE…DSRS). A compositionally biased stretch (low complexity) spans 814–825 (EGSTTTTSALSK). Composition is skewed to polar residues over residues 854–864 (GQPSPTSGQNR) and 872–885 (GSGS…SKLQ). The segment covering 889–903 (ILDRGRSENGGDRGR) has biased composition (basic and acidic residues). The span at 910-920 (HPNTTPRTFSR) shows a compositional bias: polar residues.

As to quaternary structure, interacts with ARAC11/ROP1. In terms of tissue distribution, expressed in pollen and pollen tubes.

The protein resides in the cell membrane. Acts as a GTPase activator for the Rac-type GTPase by converting it to an inactive GDP-bound state. Maintains the global inactivation of ARAC11/ROP1 at the apex in pollen tubes in order to regulate the polar cell growth. This Arabidopsis thaliana (Mouse-ear cress) protein is Rho GTPase-activating protein REN1 (REN1).